The primary structure comprises 183 residues: Ribosome-recycling factor (183 aa).

It belongs to the RRF family.

It is found in the cytoplasm. Its function is as follows. Responsible for the release of ribosomes from messenger RNA at the termination of protein biosynthesis. May increase the efficiency of translation by recycling ribosomes from one round of translation to another. The sequence is that of Ribosome-recycling factor from Mycoplasma mobile (strain ATCC 43663 / 163K / NCTC 11711) (Mesomycoplasma mobile).